The primary structure comprises 234 residues: Ribonuclease HII (234 aa).

One can recognise an RNase H type-2 domain in the interval 47–234; it reads IRIAGVDEVG…KTVHKILYQE (188 aa). A divalent metal cation-binding residues include D53, E54, and D144.

Belongs to the RNase HII family. Mn(2+) serves as cofactor. It depends on Mg(2+) as a cofactor.

It is found in the cytoplasm. It carries out the reaction Endonucleolytic cleavage to 5'-phosphomonoester.. Endonuclease that specifically degrades the RNA of RNA-DNA hybrids. The chain is Ribonuclease HII from Ruegeria pomeroyi (strain ATCC 700808 / DSM 15171 / DSS-3) (Silicibacter pomeroyi).